Reading from the N-terminus, the 156-residue chain is ATP synthase subunit b (156 aa).

The chain crosses the membrane as a helical span at residues 7 to 27; the sequence is LIGQTVAFIIFVWFCMKFVWP.

This sequence belongs to the ATPase B chain family. F-type ATPases have 2 components, F(1) - the catalytic core - and F(0) - the membrane proton channel. F(1) has five subunits: alpha(3), beta(3), gamma(1), delta(1), epsilon(1). F(0) has three main subunits: a(1), b(2) and c(10-14). The alpha and beta chains form an alternating ring which encloses part of the gamma chain. F(1) is attached to F(0) by a central stalk formed by the gamma and epsilon chains, while a peripheral stalk is formed by the delta and b chains.

It is found in the cell inner membrane. In terms of biological role, f(1)F(0) ATP synthase produces ATP from ADP in the presence of a proton or sodium gradient. F-type ATPases consist of two structural domains, F(1) containing the extramembraneous catalytic core and F(0) containing the membrane proton channel, linked together by a central stalk and a peripheral stalk. During catalysis, ATP synthesis in the catalytic domain of F(1) is coupled via a rotary mechanism of the central stalk subunits to proton translocation. Component of the F(0) channel, it forms part of the peripheral stalk, linking F(1) to F(0). The chain is ATP synthase subunit b from Shewanella baltica (strain OS185).